The sequence spans 804 residues: Endoplasmin (804 aa).

A signal peptide spans 1–21 (MRALWVLGLCCVLLTFGSVRA). The short motif at 42–44 (SRT) is the SRT pseudosubstrate motif element. Asn62 carries an N-linked (GlcNAc...) asparagine glycan. At Ser64 the chain carries Phosphoserine. An N-linked (GlcNAc...) asparagine glycan is attached at Asn107. The ATP site is built by Asn107, Asp149, and Asn162. Lys168 is subject to N6-(2-hydroxyisobutyryl)lysine. Phosphoserine is present on Ser172. Phe199 lines the ATP pocket. Asn217 carries N-linked (GlcNAc...) asparagine glycosylation. A disordered region spans residues 288–323 (TVEEPMEEEEAAKEEKEESDDEAAVEEEEEEKKPKT). Acidic residues predominate over residues 289–317 (VEEPMEEEEAAKEEKEESDDEAAVEEEEE). Phosphoserine is present on residues Ser306 and Ser403. Lys404 bears the N6-succinyllysine mark. Asn445 carries an N-linked (GlcNAc...) asparagine glycan. Phosphoserine is present on Ser447. Lys479 is subject to N6-acetyllysine. Asn481 and Asn502 each carry an N-linked (GlcNAc...) asparagine glycan. Position 633 is an N6-succinyllysine (Lys633). A disordered region spans residues 750–804 (DPDAKVEDEPEEEPEETTEDTTEDTEQDEDEEMDVGTDEEEQETAKESTAEKDEL). Acidic residues predominate over residues 757–791 (DEPEEEPEETTEDTTEDTEQDEDEEMDVGTDEEEQ). Thr786 is subject to Phosphothreonine. The span at 792-804 (ETAKESTAEKDEL) shows a compositional bias: basic and acidic residues. A Prevents secretion from ER motif is present at residues 801 to 804 (KDEL).

Belongs to the heat shock protein 90 family. As to quaternary structure, homodimer; disulfide-linked. Component of an EIF2 complex at least composed of CELF1/CUGBP1, CALR, CALR3, EIF2S1, EIF2S2, HSP90B1 and HSPA5. Part of a large chaperone multiprotein complex comprising DNAJB11, HSP90B1, HSPA5, HYOU, PDIA2, PDIA4, PDIA6, PPIB, SDF2L1, UGGT1 and very small amounts of ERP29, but not, or at very low levels, CALR nor CANX. Interacts with AIMP1; regulates its retention in the endoplasmic reticulum. Hyperglycosylated form interacts with OS9; promoting its degradation by the endoplasmic reticulum associated degradation (ERAD). Interacts with CNPY3. This interaction is disrupted in the presence of ATP. Interacts with TLR4 and TLR9, but not with TLR3. Interacts with MZB1 in a calcium-dependent manner. Interacts with METTL23. Interacts with IL1B; the interaction facilitates cargo translocation into the ERGIC. Interacts with EIF2AK3. In terms of processing, phosphorylated by CK2. Post-translationally, N-glycosylated cotranslationally at Asn-217 by STT3A-containing OST-A complex: this glycosylation is constitutive. In response to various stress, 5 additional facultative sites (Asn-62, Asn-107, Asn-445, Asn-481 and Asn-502) can be glycosylated post-translationally by STT3B-containing OST-B complex, leading to a hyperglycosylated form that is degraded by the ER-associated degradation (ERAD) pathway. In normal conditions, the OST-A complex together with CCDC134 prevent glycosylation at facultative sites during protein folding, thereby preventing hyperglycosylation. Mechanistically, nascent HSP90B1 is tethered during translation to a specialized CCDC134-containing translocon that forms a microenvironment for its folding, in which STT3A associates with the SRT pseudosubstrate motif, and prevents access to facultative glycosylation sites until folding is completed, rendering its facultative sites inaccessible to the OST-B complex.

It localises to the endoplasmic reticulum lumen. The protein resides in the sarcoplasmic reticulum lumen. The protein localises to the melanosome. The catalysed reaction is ATP + H2O = ADP + phosphate + H(+). In terms of biological role, ATP-dependent chaperone involved in the processing of proteins in the endoplasmic reticulum, regulating their transport. Together with MESD, acts as a modulator of the Wnt pathway by promoting the folding of LRP6, a coreceptor of the canonical Wnt pathway. When associated with CNPY3, required for proper folding of Toll-like receptors. Promotes folding and trafficking of TLR4 to the cell surface. May participate in the unfolding of cytosolic leaderless cargos (lacking the secretion signal sequence) such as the interleukin 1/IL-1 to facilitate their translocation into the ERGIC (endoplasmic reticulum-Golgi intermediate compartment) and secretion; the translocation process is mediated by the cargo receptor TMED10. The protein is Endoplasmin (HSP90B1) of Macaca fascicularis (Crab-eating macaque).